The following is a 388-amino-acid chain: MGSSEAETPAKANKASAPQEQQPPATSSTATPTVYPDWTSFQGYPPIPPHGFFPSPVVSNPQGHPYMWGPQPMMPPYGSPPYVIYPPGGIYAHPSMRPGAHPFAPYTMTSPNGNPDAAGTTTTAATAGGETNGKSSEGKEKSPIKRSKGSLGSLNMITGKNCVEHGKTSGASANGTISQSGESGSESSSEGSEANSQNDSQHKESGQEQDGDVRSSQNGVSPSPSQAQLKQTLAIMQMPSSGPVPGPTTNLNIGMDYWANTASSSPALHGKVTPTAIPGAVAPTEPWMQDERELKRQKRKQSNRDSARRSRLRKQAECEELAQRAEVLKQENASLKDEVSRIRKEYDELLSKNSSLKDNVGDKQHKTDEAGLDNKLQHSGDDSQKDTN.

4 disordered regions span residues 1–49 (MGSS…PIPP), 103–249 (FAPY…GPTT), 261–316 (TASS…RKQA), and 348–388 (ELLS…KDTN). Low complexity-rich tracts occupy residues 23–33 (PPATSSTATPT) and 117–129 (AAGTTTTAATAGG). The segment covering 169 to 179 (SGASANGTISQ) has biased composition (polar residues). Positions 180 to 193 (SGESGSESSSEGSE) are enriched in low complexity. Residues 214-231 (RSSQNGVSPSPSQAQLKQ) show a composition bias toward polar residues. Residues 293-356 (ELKRQKRKQS…DELLSKNSSL (64 aa)) form the bZIP domain. Residues 295–314 (KRQKRKQSNRDSARRSRLRK) are basic motif. A compositionally biased stretch (basic and acidic residues) spans 302–316 (SNRDSARRSRLRKQA). Residues 321 to 356 (LAQRAEVLKQENASLKDEVSRIRKEYDELLSKNSSL) are leucine-zipper. 2 stretches are compositionally biased toward basic and acidic residues: residues 359 to 369 (NVGDKQHKTDE) and 375 to 388 (KLQHSGDDSQKDTN).

It belongs to the bZIP family. Highly expressed in roots and at lower levels in stems and leaves.

The protein resides in the nucleus. Functionally, probable transcription factor that may be involved in responses to fungal pathogen infection and abiotic stresses. The sequence is that of bZIP transcription factor 1-D from Triticum aestivum (Wheat).